The primary structure comprises 179 residues: Putative mediator of RNA polymerase II transcription subunit 28 (179 aa).

Residues 81-119 are a coiled coil; sequence SAEKNKIQLKQEIYKVKKEIENKDRLIERYKNKVKEWKY.

Belongs to the Mediator complex subunit 28 family. As to quaternary structure, component of the Mediator complex.

It localises to the nucleus. Its function is as follows. Component of the Mediator complex, a coactivator involved in the regulated transcription of nearly all RNA polymerase II-dependent genes. Mediator functions as a bridge to convey information from gene-specific regulatory proteins to the basal RNA polymerase II transcription machinery. Mediator is recruited to promoters by direct interactions with regulatory proteins and serves as a scaffold for the assembly of a functional preinitiation complex with RNA polymerase II and the general transcription factors. This is Putative mediator of RNA polymerase II transcription subunit 28 (med28) from Dictyostelium discoideum (Social amoeba).